Reading from the N-terminus, the 379-residue chain is MINLLDFNKTGLIHFCEEMGEKPYRARQLLRWVHRFGKTEFIEMSDLAKTFRQKLMERAVVHPPEIISDHTAGDGTRKWLLSTGTGNAVEMVFIPEPNRGTLCVSSQVGCALACSFCSTGRQGFNRNLSVAEIIGQLWWANRLLEGQVGELFSPDVAQIRADNTDTRRPVTNVVMMGMGEPLANFENVVTALDLMLSDDAYGLSRRRVTVSTSGLVPALDRLRERCPVALAVSLHAPNDALRDQLVPINKKYPIRDLLAACERYLPAAPRDFITFEYVMLRDVNDSIALARELVQVVRNIPCKLNLIPFNTFAGSGYERSNTDAIDNFRDVLMQAGIVTTVRKTRGDDIAAACGQLAGQVKDKTRRTGTCGSGRAVVTG.

Glutamate 90 functions as the Proton acceptor in the catalytic mechanism. One can recognise a Radical SAM core domain in the interval 96 to 348 (EPNRGTLCVS…TTVRKTRGDD (253 aa)). Cysteines 103 and 353 form a disulfide. Cysteine 110, cysteine 114, and cysteine 117 together coordinate [4Fe-4S] cluster. Residues 179 to 180 (GE), serine 211, 233 to 235 (SLH), and asparagine 310 each bind S-adenosyl-L-methionine. The S-methylcysteine intermediate role is filled by cysteine 353.

It belongs to the radical SAM superfamily. RlmN family. Requires [4Fe-4S] cluster as cofactor.

Its subcellular location is the cytoplasm. It catalyses the reaction adenosine(2503) in 23S rRNA + 2 reduced [2Fe-2S]-[ferredoxin] + 2 S-adenosyl-L-methionine = 2-methyladenosine(2503) in 23S rRNA + 5'-deoxyadenosine + L-methionine + 2 oxidized [2Fe-2S]-[ferredoxin] + S-adenosyl-L-homocysteine. The enzyme catalyses adenosine(37) in tRNA + 2 reduced [2Fe-2S]-[ferredoxin] + 2 S-adenosyl-L-methionine = 2-methyladenosine(37) in tRNA + 5'-deoxyadenosine + L-methionine + 2 oxidized [2Fe-2S]-[ferredoxin] + S-adenosyl-L-homocysteine. Its function is as follows. Specifically methylates position 2 of adenine 2503 in 23S rRNA and position 2 of adenine 37 in tRNAs. m2A2503 modification seems to play a crucial role in the proofreading step occurring at the peptidyl transferase center and thus would serve to optimize ribosomal fidelity. The chain is Dual-specificity RNA methyltransferase RlmN from Nitrosomonas eutropha (strain DSM 101675 / C91 / Nm57).